Reading from the N-terminus, the 61-residue chain is Photosystem II reaction center protein K (61 aa).

Positions 1–24 (MPNILSLTCICFNSVIYPTSFFFA) are excised as a propeptide. The helical transmembrane segment at 32–52 (IFNPIVDFMPVIPVLFFLLAF) threads the bilayer.

Belongs to the PsbK family. As to quaternary structure, PSII is composed of 1 copy each of membrane proteins PsbA, PsbB, PsbC, PsbD, PsbE, PsbF, PsbH, PsbI, PsbJ, PsbK, PsbL, PsbM, PsbT, PsbX, PsbY, PsbZ, Psb30/Ycf12, at least 3 peripheral proteins of the oxygen-evolving complex and a large number of cofactors. It forms dimeric complexes.

Its subcellular location is the plastid. The protein resides in the chloroplast thylakoid membrane. In terms of biological role, one of the components of the core complex of photosystem II (PSII). PSII is a light-driven water:plastoquinone oxidoreductase that uses light energy to abstract electrons from H(2)O, generating O(2) and a proton gradient subsequently used for ATP formation. It consists of a core antenna complex that captures photons, and an electron transfer chain that converts photonic excitation into a charge separation. This is Photosystem II reaction center protein K from Oryza nivara (Indian wild rice).